The sequence spans 184 residues: Peptide deformylase (184 aa).

Fe cation is bound by residues Cys-98 and His-140. The active site involves Glu-141. Fe cation is bound at residue His-144.

This sequence belongs to the polypeptide deformylase family. Fe(2+) is required as a cofactor.

It catalyses the reaction N-terminal N-formyl-L-methionyl-[peptide] + H2O = N-terminal L-methionyl-[peptide] + formate. Its function is as follows. Removes the formyl group from the N-terminal Met of newly synthesized proteins. Requires at least a dipeptide for an efficient rate of reaction. N-terminal L-methionine is a prerequisite for activity but the enzyme has broad specificity at other positions. The polypeptide is Peptide deformylase (Bacteroides fragilis (strain ATCC 25285 / DSM 2151 / CCUG 4856 / JCM 11019 / LMG 10263 / NCTC 9343 / Onslow / VPI 2553 / EN-2)).